The chain runs to 149 residues: Flagellar assembly factor FliW (149 aa).

It belongs to the FliW family. Interacts with translational regulator CsrA and flagellin(s).

It is found in the cytoplasm. Functionally, acts as an anti-CsrA protein, binds CsrA and prevents it from repressing translation of its target genes, one of which is flagellin. Binds to flagellin and participates in the assembly of the flagellum. This Thermotoga sp. (strain RQ2) protein is Flagellar assembly factor FliW.